A 319-amino-acid chain; its full sequence is MVSEYKKAGVDLNKLKEYHTLALNTFQNSGVLKIGHYANAIKLDDKYLAMHVDGVGTKTILALKTGIIEPTGIDCIAMNVNDLVCIGARPLAGVDYLALEKPMDDVVEKVMKGLKQGADEANIEIIGGETAIMPGVITGYDLSCSVIGISDRLKTGEDVAPGDVILGLKSNGVHSNGYSLIRKLIDEGKLSLNDWGEELMRPTRIYSSSIIPILDKIKALAHITGGAFSKLKRITNYRINLKMPDPPEVFKAIENAGVPHFEMYKIFNMGIGMIIFVSKDLKDDIIEFLSKKETVYELGYVEKGEGIKITTYKNEILYI.

Belongs to the AIR synthase family.

Its subcellular location is the cytoplasm. The enzyme catalyses 2-formamido-N(1)-(5-O-phospho-beta-D-ribosyl)acetamidine + ATP = 5-amino-1-(5-phospho-beta-D-ribosyl)imidazole + ADP + phosphate + H(+). It participates in purine metabolism; IMP biosynthesis via de novo pathway; 5-amino-1-(5-phospho-D-ribosyl)imidazole from N(2)-formyl-N(1)-(5-phospho-D-ribosyl)glycinamide: step 2/2. The polypeptide is Phosphoribosylformylglycinamidine cyclo-ligase (Sulfurisphaera tokodaii (strain DSM 16993 / JCM 10545 / NBRC 100140 / 7) (Sulfolobus tokodaii)).